Consider the following 206-residue polypeptide: Large ribosomal subunit protein uL3 (206 aa).

Residues 127–151 are disordered; that stretch reads SGGPSSHGSKFHRHLGGTGQATTPA.

Belongs to the universal ribosomal protein uL3 family. As to quaternary structure, part of the 50S ribosomal subunit. Forms a cluster with proteins L14 and L19.

One of the primary rRNA binding proteins, it binds directly near the 3'-end of the 23S rRNA, where it nucleates assembly of the 50S subunit. This is Large ribosomal subunit protein uL3 from Borrelia garinii subsp. bavariensis (strain ATCC BAA-2496 / DSM 23469 / PBi) (Borreliella bavariensis).